The chain runs to 184 residues: MRTFAVHESTIAKRYATALAELASELNILDSIRDELAHFQALLAESPEMHEMMVSPTVSKESQHKLISTYLEYAKPNDLTANFLRLLIDKHRMALLNDVATAIVRVVDERAGRIQVKVETPKALTPSLVAKLEKSLADVTGKEVSLEISEKPELLGGLVIRMGSVMLDDSLRTQLHRLKEIMKG.

The protein belongs to the ATPase delta chain family. F-type ATPases have 2 components, F(1) - the catalytic core - and F(0) - the membrane proton channel. F(1) has five subunits: alpha(3), beta(3), gamma(1), delta(1), epsilon(1). F(0) has three main subunits: a(1), b(2) and c(10-14). The alpha and beta chains form an alternating ring which encloses part of the gamma chain. F(1) is attached to F(0) by a central stalk formed by the gamma and epsilon chains, while a peripheral stalk is formed by the delta and b chains.

Its subcellular location is the cell inner membrane. Functionally, f(1)F(0) ATP synthase produces ATP from ADP in the presence of a proton or sodium gradient. F-type ATPases consist of two structural domains, F(1) containing the extramembraneous catalytic core and F(0) containing the membrane proton channel, linked together by a central stalk and a peripheral stalk. During catalysis, ATP synthesis in the catalytic domain of F(1) is coupled via a rotary mechanism of the central stalk subunits to proton translocation. In terms of biological role, this protein is part of the stalk that links CF(0) to CF(1). It either transmits conformational changes from CF(0) to CF(1) or is implicated in proton conduction. The polypeptide is ATP synthase subunit delta (Magnetococcus marinus (strain ATCC BAA-1437 / JCM 17883 / MC-1)).